We begin with the raw amino-acid sequence, 448 residues long: GA-binding protein subunit beta-2 (448 aa).

ANK repeat units lie at residues 5–34 (DLGK…PFTT), 37–66 (LGTS…SRDA), 70–99 (VDRT…DVNA), 103–132 (LKMT…DVHA), and 136–166 (FDKS…QVNV). Ser-256 is modified (phosphoserine). Disordered regions lie at residues 325–354 (EEEE…GNER) and 420–448 (ELEE…TVSS). Positions 337–354 (RIGEKTNSVEESKEGNER) are enriched in basic and acidic residues. The stretch at 345-395 (VEESKEGNERELLQQQLQEANRRAQEYRHQLLKKEQEAEQYRLKLEAIARQ) forms a coiled coil. Polar residues predominate over residues 428-448 (VTGSAGTTEPHTRVSMATVSS).

In terms of assembly, heterotetramer of two alpha and two beta subunits. The C-terminal is necessary for the formation of a heterotetrameric GABP-alpha-2/beta-2 complex, and also facilitates homotypic dimerization. Interacts with ADGRB2.

Its subcellular location is the nucleus. Its function is as follows. May function as transcription factor capable of interacting with purine rich repeats (GA repeats). This chain is GA-binding protein subunit beta-2 (GABPB2), found in Homo sapiens (Human).